Consider the following 550-residue polypeptide: MNKIIILLIILLSFDIISAAKKFGRKGIRTLGDNEVLLSDGAIRGTVTDTHRVFYGIPFARPPIDELRYEDPQPPKPWSYVRDGTKQRDQCIQDCKLGKGSCSEVGTSEDCLYLDVFIPRTVNPGSKVPVMVFIPGGAFTQGTGSCPLYDGLKFANSSVIVVNVNYRLGVLGFLCTGLLSGNFGFLDQVMALDWVQENIEVFGGDKNQVTIYGESAGAFSVAAHLSSEKSEGKFHRAILSSTPYTVGLKSQTVARGFAGRFSSKIGCDLEDIDCHRSKSPEEILAIQKELGLAIGDKILDAFTIWSPVVDGINVNEQPLTMIKQGTTHDVPTIIGDNQDEAILFVYMTYKNVVIPSSYRTMVHVLFGIANGNKVLEHYPLPGFLKDSRPILSKLLTDYLFRCPGRYHVSKSAQANESPIYHYQYKQVLSGGHSFEACEGLVCHGTELPMVFNTYESALDLDLEEEEEEFAEQLNNYFVNFIKYSNPSHPNGLPTPKVWNPTTKTTNTSLVMKLGFEVKDLITNDPKCDLFDSLSYNGYTKDQNRMRKSKK.

The first 19 residues, 1-19, serve as a signal peptide directing secretion; the sequence is MNKIIILLIILLSFDIISA. Cys91 and Cys111 are joined by a disulfide. N-linked (GlcNAc...) asparagine glycosylation occurs at Asn156. Ser215 (acyl-ester intermediate) is an active-site residue. A disulfide bridge connects residues Cys267 and Cys274. Catalysis depends on charge relay system residues Glu340 and His443. Residue Asn506 is glycosylated (N-linked (GlcNAc...) asparagine).

Belongs to the type-B carboxylesterase/lipase family.

It localises to the cytoplasmic vesicle. Its subcellular location is the esterosome membrane. The protein is Crystal protein (cryS) of Dictyostelium discoideum (Social amoeba).